We begin with the raw amino-acid sequence, 596 residues long: Actin-histidine N-methyltransferase (596 aa).

S-adenosyl-L-methionine contacts are provided by residues arginine 75, 104–106 (EGY), arginine 254, 275–279 (DMCNH), and 325–327 (NGF). One can recognise an SET domain in the interval 94–314 (DGFEISNFAD…EGEQIYIFYG (221 aa)). The interval 556-596 (QCKDLNGTQEDPPGGGAVVKEIEKHDPSAKRTEGEPKDAGK) is disordered. The span at 575 to 596 (KEIEKHDPSAKRTEGEPKDAGK) shows a compositional bias: basic and acidic residues.

Belongs to the class V-like SAM-binding methyltransferase superfamily. SETD3 actin-histidine methyltransferase family.

It localises to the cytoplasm. It catalyses the reaction L-histidyl-[protein] + S-adenosyl-L-methionine = N(tele)-methyl-L-histidyl-[protein] + S-adenosyl-L-homocysteine + H(+). Protein-histidine N-methyltransferase that specifically mediates 3-methylhistidine (tele-methylhistidine) methylation of actin at 'His-73'. Does not have protein-lysine N-methyltransferase activity and probably only catalyzes histidine methylation of actin. This is Actin-histidine N-methyltransferase from Danio rerio (Zebrafish).